Reading from the N-terminus, the 166-residue chain is Transcription antitermination protein NusB (166 aa).

A compositionally biased stretch (basic and acidic residues) spans 1 to 18 (MISDESDRFNPRDPKPAD). The segment at 1–28 (MISDESDRFNPRDPKPADAGKPSKSAKR) is disordered.

It belongs to the NusB family.

Its function is as follows. Involved in transcription antitermination. Required for transcription of ribosomal RNA (rRNA) genes. Binds specifically to the boxA antiterminator sequence of the ribosomal RNA (rrn) operons. The polypeptide is Transcription antitermination protein NusB (Pseudomonas putida (strain GB-1)).